A 236-amino-acid chain; its full sequence is 1-(5-phosphoribosyl)-5-[(5-phosphoribosylamino)methylideneamino] imidazole-4-carboxamide isomerase (236 aa).

D8 acts as the Proton acceptor in catalysis. D127 serves as the catalytic Proton donor.

It belongs to the HisA/HisF family.

It is found in the cytoplasm. The enzyme catalyses 1-(5-phospho-beta-D-ribosyl)-5-[(5-phospho-beta-D-ribosylamino)methylideneamino]imidazole-4-carboxamide = 5-[(5-phospho-1-deoxy-D-ribulos-1-ylimino)methylamino]-1-(5-phospho-beta-D-ribosyl)imidazole-4-carboxamide. It functions in the pathway amino-acid biosynthesis; L-histidine biosynthesis; L-histidine from 5-phospho-alpha-D-ribose 1-diphosphate: step 4/9. The protein is 1-(5-phosphoribosyl)-5-[(5-phosphoribosylamino)methylideneamino] imidazole-4-carboxamide isomerase of Campylobacter concisus (strain 13826).